Consider the following 331-residue polypeptide: Centriolar satellite-associated tubulin polyglutamylase complex regulator 1 (331 aa).

The interval 1 to 111 (MLSPERLALP…HCLLQLLCPD (111 aa)) is required for interaction with PCM1. The tract at residues 1-225 (MLSPERLALP…SCPPPALVKE (225 aa)) is required for interaction with TPGS1, LRRC49, and TTLL1. Residues 112-331 (FPLELTQKAA…STEETDESET (220 aa)) form a required for interaction with TPGS2 region. Positions 292 to 331 (SCLPSRTPPRVGSPWKPLHRSRKLDAESDGSTEETDESET) are disordered. The segment covering 318–331 (ESDGSTEETDESET) has biased composition (acidic residues). Residue Ser319 is modified to Phosphoserine.

It belongs to the CSTPP1 family. Interacts with PCM1. Interacts with TTLL1, TPGS1, TPGS2 and LRRC49; the interactions link CSTPP1 to the complex TPGC. Binds to alpha-tubulin.

It localises to the cytoplasm. It is found in the cytoskeleton. Its subcellular location is the microtubule organizing center. The protein resides in the centrosome. The protein localises to the centriolar satellite. In terms of biological role, regulator of the tubulin polyglutamylase complex (TPGC) that controls cytoskeletal organization, nuclear shape, and cilium disassembly by balancing microtubule and actin assembly. Regulates the assembly and stability of the TPGC and thereby modulates polyglutamylation of the microtubule, which antagonizes MAP4 binding. This Rattus norvegicus (Rat) protein is Centriolar satellite-associated tubulin polyglutamylase complex regulator 1 (Cstpp1).